A 205-amino-acid chain; its full sequence is Small ribosomal subunit protein uS4 (205 aa).

Basic and acidic residues predominate over residues 1–16 (MSKRETTKYKIDRRMG). Positions 1–46 (MSKRETTKYKIDRRMGENIWGRPKSPVNRRDYGPGQHGQRRKGKLS) are disordered. The S4 RNA-binding domain occupies 94-157 (SRLDAVIYRA…KQLVLVLESV (64 aa)).

It belongs to the universal ribosomal protein uS4 family. Part of the 30S ribosomal subunit. Contacts protein S5. The interaction surface between S4 and S5 is involved in control of translational fidelity.

Functionally, one of the primary rRNA binding proteins, it binds directly to 16S rRNA where it nucleates assembly of the body of the 30S subunit. With S5 and S12 plays an important role in translational accuracy. The chain is Small ribosomal subunit protein uS4 from Bartonella henselae (strain ATCC 49882 / DSM 28221 / CCUG 30454 / Houston 1) (Rochalimaea henselae).